A 375-amino-acid polypeptide reads, in one-letter code: Alanine racemase (375 aa).

Lys38 functions as the Proton acceptor; specific for D-alanine in the catalytic mechanism. N6-(pyridoxal phosphate)lysine is present on Lys38. Residue Arg137 participates in substrate binding. The active-site Proton acceptor; specific for L-alanine is Tyr266. Residue Met314 participates in substrate binding.

It belongs to the alanine racemase family. Pyridoxal 5'-phosphate serves as cofactor.

The enzyme catalyses L-alanine = D-alanine. Its pathway is amino-acid biosynthesis; D-alanine biosynthesis; D-alanine from L-alanine: step 1/1. In terms of biological role, catalyzes the interconversion of L-alanine and D-alanine. May also act on other amino acids. The sequence is that of Alanine racemase (alr) from Cutibacterium acnes (strain DSM 16379 / KPA171202) (Propionibacterium acnes).